A 162-amino-acid polypeptide reads, in one-letter code: NADH-quinone oxidoreductase subunit I (162 aa).

2 4Fe-4S ferredoxin-type domains span residues 54-83 (RRYENGEERCIACKLCEVVCPALAITINST) and 93-122 (SSYEMDLFKCIFCGYCEESCPVDSIVETNI). [4Fe-4S] cluster contacts are provided by cysteine 63, cysteine 66, cysteine 69, cysteine 73, cysteine 102, cysteine 105, cysteine 108, and cysteine 112.

Belongs to the complex I 23 kDa subunit family. In terms of assembly, NDH-1 is composed of 14 different subunits. Subunits NuoA, H, J, K, L, M, N constitute the membrane sector of the complex. The cofactor is [4Fe-4S] cluster.

The protein resides in the cell inner membrane. The enzyme catalyses a quinone + NADH + 5 H(+)(in) = a quinol + NAD(+) + 4 H(+)(out). In terms of biological role, NDH-1 shuttles electrons from NADH, via FMN and iron-sulfur (Fe-S) centers, to quinones in the respiratory chain. The immediate electron acceptor for the enzyme in this species is believed to be ubiquinone. Couples the redox reaction to proton translocation (for every two electrons transferred, four hydrogen ions are translocated across the cytoplasmic membrane), and thus conserves the redox energy in a proton gradient. The sequence is that of NADH-quinone oxidoreductase subunit I from Francisella tularensis subsp. tularensis (strain FSC 198).